The chain runs to 61 residues: Cecropin-D (61 aa).

Residues 1-22 (MKFSKIFVFVFAIVFATASVSA) form the signal peptide. The propeptide at 23-24 (AP) is removed by a dipeptidylpeptidase. A Glutamine amide modification is found at glutamine 60.

It belongs to the cecropin family. Mainly in fat body. Lower in hemocytes. Not expressed in midguts, malpighian tubules and silk glands.

Its subcellular location is the secreted. Its function is as follows. Cecropins have lytic and antibacterial activity against several Gram-positive and Gram-negative bacteria. The protein is Cecropin-D (CECD) of Bombyx mori (Silk moth).